The chain runs to 388 residues: Succinate--CoA ligase [ADP-forming] subunit beta (388 aa).

One can recognise an ATP-grasp domain in the interval 9-244; the sequence is KEILRKYNVP…LDEEDANEIE (236 aa). ATP contacts are provided by residues lysine 46, 53–55, glutamate 99, alanine 102, and glutamate 107; that span reads GRG. Mg(2+)-binding residues include asparagine 199 and aspartate 213. Substrate is bound by residues asparagine 264 and 321 to 323; that span reads GIM.

It belongs to the succinate/malate CoA ligase beta subunit family. In terms of assembly, heterotetramer of two alpha and two beta subunits. Mg(2+) is required as a cofactor.

The catalysed reaction is succinate + ATP + CoA = succinyl-CoA + ADP + phosphate. It carries out the reaction GTP + succinate + CoA = succinyl-CoA + GDP + phosphate. Its pathway is carbohydrate metabolism; tricarboxylic acid cycle; succinate from succinyl-CoA (ligase route): step 1/1. In terms of biological role, succinyl-CoA synthetase functions in the citric acid cycle (TCA), coupling the hydrolysis of succinyl-CoA to the synthesis of either ATP or GTP and thus represents the only step of substrate-level phosphorylation in the TCA. The beta subunit provides nucleotide specificity of the enzyme and binds the substrate succinate, while the binding sites for coenzyme A and phosphate are found in the alpha subunit. The chain is Succinate--CoA ligase [ADP-forming] subunit beta from Ralstonia nicotianae (strain ATCC BAA-1114 / GMI1000) (Ralstonia solanacearum).